The following is a 38-amino-acid chain: Kunitz-type trypsin inhibitor beta chain (38 aa).

This sequence belongs to the protease inhibitor I3 (leguminous Kunitz-type inhibitor) family. In terms of assembly, heterodimer of an alpha and a beta chain linked by a disulfide bond.

Functionally, inhibition of trypsin. This Neltuma juliflora (Mesquite) protein is Kunitz-type trypsin inhibitor beta chain.